Reading from the N-terminus, the 256-residue chain is MSNVDESQPLITHLVELRNRLLRCVICVVLVFVALVYFSNDIYHFVAAPLTAVMPKGATMIATNIQTPFFTPIKLTAIVAIFISVPYLLYQIWAFIAPALYQHEKRMIYPLLFSSTILFYCGVAFAYYIVFPLVFSFFTQTAPEGVTIATDISSYLDFALALFLAFGVCFEVPIAIILLCWTGITTVKALSEKRPYIIVAAFFIGMLLTPPDVFSQTLLAIPMCLLFELGLLVARFYQPKDDESAVKNNDESEKTQ.

6 helical membrane-spanning segments follow: residues 25-45, 77-97, 117-137, 158-178, 195-215, and 217-237; these read VICV…IYHF, AIVA…AFIA, ILFY…VFSF, FALA…AIIL, PYII…DVFS, and TLLA…ARFY.

This sequence belongs to the TatC family. In terms of assembly, the Tat system comprises two distinct complexes: a TatABC complex, containing multiple copies of TatA, TatB and TatC subunits, and a separate TatA complex, containing only TatA subunits. Substrates initially bind to the TatABC complex, which probably triggers association of the separate TatA complex to form the active translocon.

It is found in the cell inner membrane. Part of the twin-arginine translocation (Tat) system that transports large folded proteins containing a characteristic twin-arginine motif in their signal peptide across membranes. Together with TatB, TatC is part of a receptor directly interacting with Tat signal peptides. The sequence is that of Sec-independent protein translocase protein TatC from Haemophilus influenzae (strain ATCC 51907 / DSM 11121 / KW20 / Rd).